We begin with the raw amino-acid sequence, 115 residues long: Large ribosomal subunit protein uL24 (115 aa).

Belongs to the universal ribosomal protein uL24 family. As to quaternary structure, part of the 50S ribosomal subunit.

Its function is as follows. One of two assembly initiator proteins, it binds directly to the 5'-end of the 23S rRNA, where it nucleates assembly of the 50S subunit. One of the proteins that surrounds the polypeptide exit tunnel on the outside of the subunit. The chain is Large ribosomal subunit protein uL24 from Phytoplasma mali (strain AT).